Here is a 418-residue protein sequence, read N- to C-terminus: Magnesium transporter MRS2-E (418 aa).

A disordered region spans residues 119–146 (DAAPSTNPAAADRGNGTEQGDQGSVPGL). Positions 166–232 (VCLEHACKDL…RDELEHLLDD (67 aa)) form a coiled coil. Basic and acidic residues predominate over residues 258–268 (DSHKYASVDHD). A disordered region spans residues 258-287 (DSHKYASVDHDDDREEEDHDDETESGRESS). Acidic residues predominate over residues 269 to 280 (DDREEEDHDDET). Residues 344–364 (GVMLTTATVVVTAGIVVVSLF) form a helical membrane-spanning segment. The short motif at 365–367 (GMN) is the Required for magnesium transport activity element. The helical transmembrane segment at 389–409 (FWETTFGTVAGCIAIYLLAIY) threads the bilayer.

The protein belongs to the CorA metal ion transporter (MIT) (TC 1.A.35.5) family.

It is found in the membrane. Its function is as follows. Magnesium transporter that may mediate the influx of magnesium. The protein is Magnesium transporter MRS2-E (MRS2-E) of Oryza sativa subsp. indica (Rice).